Consider the following 300-residue polypeptide: Sulfate adenylyltransferase subunit 2 (300 aa).

Positions 281-300 are disordered; that stretch reads RAIDRDEAGSMEKKKREGYF.

The protein belongs to the PAPS reductase family. CysD subfamily. Heterodimer composed of CysD, the smaller subunit, and CysN.

It catalyses the reaction sulfate + ATP + H(+) = adenosine 5'-phosphosulfate + diphosphate. The protein operates within sulfur metabolism; hydrogen sulfide biosynthesis; sulfite from sulfate: step 1/3. Its function is as follows. With CysN forms the ATP sulfurylase (ATPS) that catalyzes the adenylation of sulfate producing adenosine 5'-phosphosulfate (APS) and diphosphate, the first enzymatic step in sulfur assimilation pathway. APS synthesis involves the formation of a high-energy phosphoric-sulfuric acid anhydride bond driven by GTP hydrolysis by CysN coupled to ATP hydrolysis by CysD. This Brucella canis (strain ATCC 23365 / NCTC 10854 / RM-666) protein is Sulfate adenylyltransferase subunit 2.